The sequence spans 147 residues: Large ribosomal subunit protein uL11 (147 aa).

The protein belongs to the universal ribosomal protein uL11 family. As to quaternary structure, part of the ribosomal stalk of the 50S ribosomal subunit. Interacts with L10 and the large rRNA to form the base of the stalk. L10 forms an elongated spine to which L12 dimers bind in a sequential fashion forming a multimeric L10(L12)X complex. Post-translationally, one or more lysine residues are methylated.

In terms of biological role, forms part of the ribosomal stalk which helps the ribosome interact with GTP-bound translation factors. The sequence is that of Large ribosomal subunit protein uL11 from Thermus thermophilus (strain ATCC BAA-163 / DSM 7039 / HB27).